Here is a 556-residue protein sequence, read N- to C-terminus: Solute carrier family 22 member 20 (556 aa).

Topologically, residues 1-15 (MAFTDLLDALGGVGR) are cytoplasmic. The chain crosses the membrane as a helical span at residues 16-36 (FQLVYTALLLLPCGLLACHTF). Over 37-137 (LQNFTAAAPP…LVCEARTLRD (101 aa)) the chain is Extracellular. Residues Asn39, Asn54, Asn61, and Asn96 are each glycosylated (N-linked (GlcNAc...) asparagine). Residues 138–158 (LAQSIYMSGVLVGAALFGGLA) traverse the membrane as a helical segment. Topologically, residues 159-166 (DRLGRKAP) are cytoplasmic. A helical membrane pass occupies residues 167-187 (LVWSYLQLAVSGAATAYVGSF). Residues 188–194 (SAYCVFR) are Extracellular-facing. A helical transmembrane segment spans residues 195–215 (FLMGMTFSGIILNSLSLVVEW). The Cytoplasmic portion of the chain corresponds to 216–225 (MPTRGRTVAG). Residues 226-246 (ILLGFSFTLGQLILAGVAYLI) traverse the membrane as a helical segment. Over 247 to 250 (RPWR) the chain is Extracellular. A helical membrane pass occupies residues 251-271 (WLQFAVSAPFLVFFLYSWWLP). Topologically, residues 272-339 (ESSRWLLLHG…DLFRTPAIRR (68 aa)) are cytoplasmic. Residues 340-360 (VTCCLMGVWFSNSVAYYGLAM) form a helical membrane-spanning segment. At 361 to 366 (DLQKFG) the chain is on the extracellular side. Residues 367–387 (LSIYLVQALFGIIDIPAMLVA) traverse the membrane as a helical segment. At 388 to 397 (TTTMIYVGRR) the chain is on the cytoplasmic side. A helical transmembrane segment spans residues 398 to 418 (ATVSSFLILAGLMVIANMFMP). The Extracellular segment spans residues 419–425 (EDLQTLR). The chain crosses the membrane as a helical span at residues 426-446 (TVQAALGKGCLASSFICVYLF). The Cytoplasmic portion of the chain corresponds to 447–457 (TGELYPTEIRQ). The chain crosses the membrane as a helical span at residues 458–478 (MGMGFASVNARLGGLVAPLIT). The Extracellular portion of the chain corresponds to 479–485 (TLGEISP). A helical membrane pass occupies residues 486 to 506 (VLPPVSFGATSVLAGMAVACF). At 507–556 (LTETRNVPLVETIAAMERRVKQGRSKRDTEQKSEEISLQQLGASPLKETI) the chain is on the cytoplasmic side. Residues 526–541 (VKQGRSKRDTEQKSEE) are compositionally biased toward basic and acidic residues. Positions 526 to 556 (VKQGRSKRDTEQKSEEISLQQLGASPLKETI) are disordered.

The protein belongs to the major facilitator (TC 2.A.1) superfamily. Organic cation transporter (TC 2.A.1.19) family. In terms of tissue distribution, highly expressed in olfactory mucosa. Weakly expressed in testis. Not detected in heart, spleen, lung, kidney or brain.

Its subcellular location is the membrane. Functionally, organic anion transporter that mediates the uptake of estrone sulfate. Inhibited by probenecid, propionate, 2-methylbutyrate, 3-methylbutyrate, benzoate, heptanoate and 2-ethylhaxanoate. May act as an odorant transporter. This Mus musculus (Mouse) protein is Solute carrier family 22 member 20 (Slc22a20).